The primary structure comprises 470 residues: MTVQTFTPNQTTTLETAKKTIAEQSQNSQTTGNKIGFVSLGCPKNLVDSERILTQLRTEGYEIVNSYHDSDVVIVNTCGFIDSAVQESLDTIGEALKENGKVIVTGCLGAREDEIRQVHPNVLGITGPHAYQNVLEHVHQYAPKPAHNPFTSLVPDHGVKLTPKHYAYLKISEGCNHRCTFCIIPSMRGDLVSRPVGEIIGEAERLKNAGVKELLVISQDTSAYGVDTKHSLGFANGSPVRHNIKALSEELGKMGIWVRLHYVYPYPHVDEIIPLMAEGKVLPYLDIPFQHASPRVLKMMKRPGQAERTLERIKKWREICPELVIRSTFIVGFPGETEEDFQILLDWLKEAQLDRVGCFKYSPVEGAAANEIEDQIPEDVKQDRFERFMLVQQEISAAKLQKRIGSTMQVLIDEVDEEGAIGRTYADAPEIDGLVYLNGETNLKPGELVNVVIEHADEYDLWGSILHDAQ.

Residues 33-143 (NKIGFVSLGC…VLEHVHQYAP (111 aa)) enclose the MTTase N-terminal domain. Cys-42, Cys-78, Cys-107, Cys-175, Cys-179, and Cys-182 together coordinate [4Fe-4S] cluster. Residues 161 to 398 (LTPKHYAYLK…MLVQQEISAA (238 aa)) form the Radical SAM core domain. One can recognise a TRAM domain in the interval 401 to 467 (QKRIGSTMQV…EYDLWGSILH (67 aa)).

Belongs to the methylthiotransferase family. RimO subfamily. It depends on [4Fe-4S] cluster as a cofactor.

The protein resides in the cytoplasm. The catalysed reaction is L-aspartate(89)-[ribosomal protein uS12]-hydrogen + (sulfur carrier)-SH + AH2 + 2 S-adenosyl-L-methionine = 3-methylsulfanyl-L-aspartate(89)-[ribosomal protein uS12]-hydrogen + (sulfur carrier)-H + 5'-deoxyadenosine + L-methionine + A + S-adenosyl-L-homocysteine + 2 H(+). Functionally, catalyzes the methylthiolation of an aspartic acid residue of ribosomal protein uS12. This is Ribosomal protein uS12 methylthiotransferase RimO from Vibrio cholerae serotype O1 (strain ATCC 39315 / El Tor Inaba N16961).